A 355-amino-acid polypeptide reads, in one-letter code: Capsid protein VP1/VP2 (355 aa).

Residues 1-21 (MADSTTMEHDGRGTKRKREAD) are compositionally biased toward basic and acidic residues. A disordered region spans residues 1 to 41 (MADSTTMEHDGRGTKRKREADGGSGQGVGKGNSNAVKEGYG).

This sequence belongs to the parvoviridae capsid protein family.

Its subcellular location is the virion. In terms of biological role, capsid protein self-assembles to form an icosahedral capsid with a T=1 symmetry, about 22 nm in diameter, and consisting of 60 copies of size variants of the capsid proteins, which differ in the N-terminushe capsid encapsulates the genomic ssDNA. Capsid proteins are responsible for the attachment to host cell receptors. This attachment induces virion internalization predominantly through clathrin-dependent endocytosis. In Aedes albopictus densovirus (isolate Boublik/1994) (AalDNV), this protein is Capsid protein VP1/VP2 (VP).